The primary structure comprises 199 residues: dTTP/UTP pyrophosphatase (199 aa).

D73 acts as the Proton acceptor in catalysis.

Belongs to the Maf family. YhdE subfamily. A divalent metal cation is required as a cofactor.

It localises to the cytoplasm. The enzyme catalyses dTTP + H2O = dTMP + diphosphate + H(+). It catalyses the reaction UTP + H2O = UMP + diphosphate + H(+). Its function is as follows. Nucleoside triphosphate pyrophosphatase that hydrolyzes dTTP and UTP. May have a dual role in cell division arrest and in preventing the incorporation of modified nucleotides into cellular nucleic acids. In Caldicellulosiruptor bescii (strain ATCC BAA-1888 / DSM 6725 / KCTC 15123 / Z-1320) (Anaerocellum thermophilum), this protein is dTTP/UTP pyrophosphatase.